The chain runs to 563 residues: Zinc finger CCHC domain-containing protein 7 (563 aa).

Disordered regions lie at residues Ser-41–Ala-64 and Ser-133–Ser-157. Polar residues predominate over residues Ser-133–Pro-142. Residues Gln-143 to Ser-157 show a composition bias toward low complexity. CCHC-type zinc fingers lie at residues Val-265–Val-282, Pro-287–Ser-304, Arg-305–Glu-322, Lys-328–Glu-345, and Val-372–Glu-389. Positions Lys-443–Asp-494 are disordered. Positions Pro-449 to Arg-463 are enriched in basic residues. Basic and acidic residues predominate over residues Lys-464 to Lys-476. Over residues Gln-477–Ser-486 the composition is skewed to basic residues.

Component of a nucleolar TRAMP-like complex, an ATP-dependent exosome regulatory complex consisting of a helicase (MTREX), an oligadenylate polymerase (PAPD5 or PAPD7), and a substrate specific RNA-binding factor (ZCCHC7 or ZCCHC8). Several TRAMP-like complexes exist with specific compositions and are associated with nuclear, or nucleolar RNA exosomes.

The protein localises to the nucleus. It is found in the nucleolus. This chain is Zinc finger CCHC domain-containing protein 7 (zcchc7), found in Xenopus laevis (African clawed frog).